Reading from the N-terminus, the 312-residue chain is Pantothenate kinase (312 aa).

Residue 97–104 participates in ATP binding; that stretch reads GSVAVGKS.

It belongs to the prokaryotic pantothenate kinase family.

Its subcellular location is the cytoplasm. The enzyme catalyses (R)-pantothenate + ATP = (R)-4'-phosphopantothenate + ADP + H(+). It functions in the pathway cofactor biosynthesis; coenzyme A biosynthesis; CoA from (R)-pantothenate: step 1/5. This is Pantothenate kinase (coaA) from Mycobacterium leprae (strain TN).